The following is a 539-amino-acid chain: Eukaryotic translation initiation factor 3 subunit L (539 aa).

The region spanning 306 to 514 is the PCI domain; the sequence is TFSDILLYIQ…IHIADTKVSH (209 aa).

This sequence belongs to the eIF-3 subunit L family. Component of the eukaryotic translation initiation factor 3 (eIF-3) complex. The eIF-3 complex interacts with pix.

The protein localises to the cytoplasm. Component of the eukaryotic translation initiation factor 3 (eIF-3) complex, which is involved in protein synthesis of a specialized repertoire of mRNAs and, together with other initiation factors, stimulates binding of mRNA and methionyl-tRNAi to the 40S ribosome. The eIF-3 complex specifically targets and initiates translation of a subset of mRNAs involved in cell proliferation. The sequence is that of Eukaryotic translation initiation factor 3 subunit L from Drosophila melanogaster (Fruit fly).